Consider the following 780-residue polypeptide: Copper-exporting P-type ATPase (780 aa).

An HMA domain is found at 2-67 (QRIQLNITGM…AVRRAALCTD (66 aa)). Residues Cys13 and Cys16 each contribute to the Cu(+) site. 6 helical membrane-spanning segments follow: residues 89-109 (LAVAAALFVPLAHLSVMFAVL), 114-134 (FPGWEWMLTALAIPVVTWAAW), 153-173 (TLISTGITAATIWSLYTVFGH), 185-205 (ALLGSDAIYFEVAAGITVFVL), 348-368 (VFVPCVFAVAALTAVGWLIAG), and 374-394 (VFSAAIAVLVIACPCALGLAT). Asp430 functions as the 4-aspartylphosphate intermediate in the catalytic mechanism. The next 2 helical transmembrane spans lie at 680 to 698 (FNMVWAFGYNIAAIPIAAA) and 704 to 722 (LVAGAAMAFSSFFVVSNSL).

The protein belongs to the cation transport ATPase (P-type) (TC 3.A.3) family. Type IB subfamily.

Its subcellular location is the cell membrane. The enzyme catalyses Cu(+)(in) + ATP + H2O = Cu(+)(out) + ADP + phosphate + H(+). Involved in copper export. The chain is Copper-exporting P-type ATPase (ctpA) from Mycobacterium leprae (strain TN).